The sequence spans 78 residues: RNA-binding protein Hfq (78 aa).

The Sm domain occupies 10 to 69 (DPFLNALRREHVPVSIYLVNGIKLQGQVESFDQYVVLLKNTVTQMVYKHAISTVVPARPV).

The protein belongs to the Hfq family. As to quaternary structure, homohexamer.

In terms of biological role, RNA chaperone that binds small regulatory RNA (sRNAs) and mRNAs to facilitate mRNA translational regulation in response to envelope stress, environmental stress and changes in metabolite concentrations. Also binds with high specificity to tRNAs. The sequence is that of RNA-binding protein Hfq from Dechloromonas aromatica (strain RCB).